The following is a 586-amino-acid chain: Probable riboflavin import ATP-binding protein RfuB (586 aa).

ABC transporter domains follow at residues 46–299 (RAVD…NECI) and 343–586 (LRVE…DSHT). Residue 89 to 96 (GKNGAGKS) coordinates ATP.

It belongs to the ABC transporter superfamily. In terms of assembly, the complex is probably composed of two ATP-binding proteins (RfuB), two transmembrane proteins (RfuC and RfuD) and a solute-binding protein (RfuA).

The protein localises to the cell inner membrane. In terms of biological role, probably part of the ABC transporter complex RfuABCD involved in riboflavin import. Probably responsible for energy coupling to the transport system. This chain is Probable riboflavin import ATP-binding protein RfuB, found in Treponema pallidum (strain Nichols).